A 505-amino-acid polypeptide reads, in one-letter code: MKTDKKKSGIEPKVFFPPLIIVGILCWLTVRDLDAANNVINAVFSYVTNIWGWAFEWYMVVMLIGWFWLVFGPYAKKKLGDEPPEFSTTSWIFMMFASCTSAAVLFWGSIEIYYYISTPPFGLAPNSTGAKEIGLAYSLFHWGPLPWATYSFLSVAFAYFFFVRKMDVIRPSSTLVPLVGEKHAKGLFGTIVDNFYLVALIFAMGTSLGLATPLVTECMQYLFGIPHTLELDAIIITCWIILNAICVACGLQKGVRIASDVRSYLSFLMLGWVFIVSGASFIMNYFTDSVGTLLMYLPRMLFYTDPIGKSGFPQSWTVFYWAWWVIYAIQMSIFLARISRGRTVRELCFGMVLGLTASTWILWTVLGSNTLLLMDKNILNIPQLIDQHGVARAIIETWAALPLSTATMWGFFILCFIATVTLINACSYTLAMSTCREVRDGEEPPLLVRIGWSVLVGIIGIVLLALGGLKPIQTAIIAGGCPLFFVNIMVTLSFIKDAKTHWKDK.

12 consecutive transmembrane segments (helical) span residues 10 to 30, 50 to 70, 92 to 112, 143 to 163, 195 to 215, 231 to 251, 263 to 283, 316 to 336, 347 to 367, 403 to 423, 446 to 466, and 475 to 495; these read IEPKVFFPPLIIVGILCWLTV, IWGWAFEWYMVVMLIGWFWLV, IFMMFASCTSAAVLFWGSIEI, GPLPWATYSFLSVAFAYFFFV, FYLVALIFAMGTSLGLATPLV, LDAIIITCWIILNAICVACGL, SYLSFLMLGWVFIVSGASFIM, WTVFYWAWWVIYAIQMSIFLA, LCFGMVLGLTASTWILWTVLG, LSTATMWGFFILCFIATVTLI, LLVRIGWSVLVGIIGIVLLAL, and AIIAGGCPLFFVNIMVTLSFI.

Belongs to the BCCT transporter (TC 2.A.15) family. CaiT subfamily. Homotrimer.

Its subcellular location is the cell inner membrane. It catalyses the reaction 4-(trimethylamino)butanoate(in) + (R)-carnitine(out) = 4-(trimethylamino)butanoate(out) + (R)-carnitine(in). Its pathway is amine and polyamine metabolism; carnitine metabolism. Its function is as follows. Catalyzes the exchange of L-carnitine for gamma-butyrobetaine. This Salmonella arizonae (strain ATCC BAA-731 / CDC346-86 / RSK2980) protein is L-carnitine/gamma-butyrobetaine antiporter.